A 1017-amino-acid polypeptide reads, in one-letter code: Centriole and centriolar satellite protein OFD1 (1017 aa).

The LisH domain occupies 69 to 101 (LIGASNSLVADHLQRCGYEYSLSVFFPESGLAK). Coiled-coil stretches lie at residues 188 to 557 (PHRS…ENEV) and 626 to 659 (EFIA…RATQ). The tract at residues 609 to 666 (PPYVNTATEASSPESDFEFIASSTKAKVRELEQEAERLEKAFRTYYQRATQNPSTSPQ) is mediates homooligomerization. 4 disordered regions span residues 657–676 (ATQN…SVNS), 685–705 (SSSM…QPLG), 721–749 (GSVV…RSLD), and 769–801 (LDRV…SFSG). Phosphoserine is present on residues serine 664, serine 670, serine 687, serine 722, serine 737, serine 747, serine 791, and serine 823. Residues 722–740 (SVVSRPRRTSSSTRLSSTP) are compositionally biased toward low complexity. The stretch at 895-966 (ELHMKERRQR…AHCENTLEKY (72 aa)) forms a coiled coil. Positions 897–988 (HMKERRQREE…ADKSSKKSGK (92 aa)) are enriched in basic and acidic residues. Positions 897–1017 (HMKERRQREE…FSHEEPDDMW (121 aa)) are disordered.

Belongs to the OFD1 family. Homooligomer. Interacts with LCA5. Interacts with RUVBL1; the interaction is direct and may mediate interaction with the NuA4 histone acetyltransferase complex. Interacts with SDCCAG8; the interaction is direct. Interacts with MAP1LC3B. Interacts with C2CD3; OFD1 may act as a negative regulator of C2CD3. Forms a complex with KIAA0753/OFIP and CEP20/FOR20; the interaction with CEP20 is detected only in the presence of KIAA0753. Interacts with PCM1; this interaction may be mediated by KIAA0753/OFIP. Interacts with TBC1D31; regulates OFD1 activity in cilium assembly. Phosphorylated. Phosphorylation at Ser-737, by the cAMP-dependent protein kinase PKA, triggers ubiquitination and proteasomal degradation of OFD1. Also increases its interaction with TBC1D31 and regulates its function in ciliogenesis. In terms of processing, ubiquitinated by PJA2, upon phosphorylation at Ser-737 by PKA, leads to the proteasomal degradation of OFD1.

It localises to the cytoplasm. It is found in the cytoskeleton. Its subcellular location is the microtubule organizing center. The protein localises to the centrosome. The protein resides in the centriole. It localises to the centriolar satellite. It is found in the cilium basal body. Its subcellular location is the nucleus. Functionally, component of the centrioles controlling mother and daughter centrioles length. Recruits to the centriole IFT88 and centriole distal appendage-specific proteins including CEP164. Involved in the biogenesis of the cilium, a centriole-associated function. The cilium is a cell surface projection found in many vertebrate cells required to transduce signals important for development and tissue homeostasis. Plays an important role in development by regulating Wnt signaling and the specification of the left-right axis. Only OFD1 localized at the centriolar satellites is removed by autophagy, which is an important step in the ciliogenesis regulation. In Mus musculus (Mouse), this protein is Centriole and centriolar satellite protein OFD1 (Ofd1).